Consider the following 360-residue polypeptide: Chorismate synthase (360 aa).

Residues arginine 48 and arginine 54 each contribute to the NADP(+) site. Residues 125–127, 246–247, glycine 286, 301–305, and arginine 327 contribute to the FMN site; these read RSS, NA, and KPTSS.

The protein belongs to the chorismate synthase family. Homotetramer. FMNH2 serves as cofactor.

The enzyme catalyses 5-O-(1-carboxyvinyl)-3-phosphoshikimate = chorismate + phosphate. It participates in metabolic intermediate biosynthesis; chorismate biosynthesis; chorismate from D-erythrose 4-phosphate and phosphoenolpyruvate: step 7/7. Catalyzes the anti-1,4-elimination of the C-3 phosphate and the C-6 proR hydrogen from 5-enolpyruvylshikimate-3-phosphate (EPSP) to yield chorismate, which is the branch point compound that serves as the starting substrate for the three terminal pathways of aromatic amino acid biosynthesis. This reaction introduces a second double bond into the aromatic ring system. The protein is Chorismate synthase of Actinobacillus pleuropneumoniae serotype 7 (strain AP76).